The primary structure comprises 294 residues: Cell division protein ZipA (294 aa).

A topological domain (periplasmic) is located at residue Met1. Residues Glu2–Phe22 traverse the membrane as a helical segment. At Asp23–Arg294 the chain is on the cytoplasmic side. The segment at Pro47–Gln107 is disordered. Over residues Ala82–Pro91 the composition is skewed to basic and acidic residues.

Belongs to the ZipA family. Interacts with FtsZ via their C-terminal domains.

Its subcellular location is the cell inner membrane. In terms of biological role, essential cell division protein that stabilizes the FtsZ protofilaments by cross-linking them and that serves as a cytoplasmic membrane anchor for the Z ring. Also required for the recruitment to the septal ring of downstream cell division proteins. This chain is Cell division protein ZipA, found in Pseudomonas putida (strain W619).